A 324-amino-acid chain; its full sequence is NAC domain-containing protein 30 (324 aa).

In terms of domain architecture, NAC spans 9 to 158 (MPPGFRFHPT…GWVVCRAFRK (150 aa)). A DNA-binding region spans residues 109-164 (IGMRKTLVYYKGRAPNGRKSDWIMHEYRLQNSELAPVQEEGWVVCRAFRKPIPNQR). Residues 232 to 244 (LPQLDSPSLSPSL) show a composition bias toward low complexity. The disordered stretch occupies residues 232-259 (LPQLDSPSLSPSLGTNKDQNESFEQEEE).

This sequence belongs to the plant vascular related NAC-domain protein family. As to quaternary structure, forms homodimer and heterodimers with other VND proteins (e.g. NAC037/VND1, NAC076/VND2 and NAC105/VND3) via their N-termini. Interacts with NAC083/VNI2. As to expression, expressed in developing protoxylems in roots and shoots. Detected in root protoxylem poles and in vessels of protoxylems, outermost metaxylems, inner metaxylems, shoots and hypocotyls. Expressed in roots, hypocotyls, cotyledons and leaves. Accumulates in the xylem but not in interfascicular fibers or pith cells in inflorescence stems. Present in developing vessels of the secondary xylem in roots undergoing secondary growth.

The protein localises to the nucleus. Transcription activator that binds to the secondary wall NAC binding element (SNBE), 5'-(T/A)NN(C/T)(T/C/G)TNNNNNNNA(A/C)GN(A/C/T)(A/T)-3', in the promoter of target genes (e.g. genes involved in secondary wall biosynthesis, cell wall modification such as xylan accumulation, and programmed cell death). Involved in xylem formation in roots and shoots, especially regulating protoxylem vessel differentiation by promoting immature xylem vessel-specific genes expression. Can activate the expression of several genes including XCP1, MYB46, NAC010/SND3, MYB103, MYB58, MYB63, MYB83, KNAT7, ASL19 and ASL20. In terms of biological role, required for the soilborne fungal pathogen Verticillium longisporum-induced transdifferentiation of chloroplast-containing bundle sheath cells to functional xylem elements leading to stunted growth, vein clearing, and leaf chloroses, as well as xylem hyperplasia within the vasculature of leaves, hypocotyls, and roots due to reinitiation of cambial activity and transdifferentiation of xylem parenchyma cells. This developmental reprogramming also mediates an increased drought stress tolerance. The protein is NAC domain-containing protein 30 of Arabidopsis thaliana (Mouse-ear cress).